Consider the following 296-residue polypeptide: Polyamine aminopropyltransferase (296 aa).

Positions 5–238 (ELWYETLHAN…GIMTFAWATQ (234 aa)) constitute a PABS domain. Gln33 provides a ligand contact to S-methyl-5'-thioadenosine. The spermidine site is built by His64 and Asp88. S-methyl-5'-thioadenosine-binding positions include Glu108 and 140–141 (DG). Asp158 acts as the Proton acceptor in catalysis. 158–161 (DCTD) is a spermidine binding site. Pro165 lines the S-methyl-5'-thioadenosine pocket.

Belongs to the spermidine/spermine synthase family. Homodimer or homotetramer.

It localises to the cytoplasm. The catalysed reaction is S-adenosyl 3-(methylsulfanyl)propylamine + putrescine = S-methyl-5'-thioadenosine + spermidine + H(+). It participates in amine and polyamine biosynthesis; spermidine biosynthesis; spermidine from putrescine: step 1/1. Catalyzes the irreversible transfer of a propylamine group from the amino donor S-adenosylmethioninamine (decarboxy-AdoMet) to putrescine (1,4-diaminobutane) to yield spermidine. In Yersinia pseudotuberculosis serotype O:3 (strain YPIII), this protein is Polyamine aminopropyltransferase.